The sequence spans 177 residues: ATP synthase subunit delta (177 aa).

It belongs to the ATPase delta chain family. F-type ATPases have 2 components, F(1) - the catalytic core - and F(0) - the membrane proton channel. F(1) has five subunits: alpha(3), beta(3), gamma(1), delta(1), epsilon(1). F(0) has three main subunits: a(1), b(2) and c(10-14). The alpha and beta chains form an alternating ring which encloses part of the gamma chain. F(1) is attached to F(0) by a central stalk formed by the gamma and epsilon chains, while a peripheral stalk is formed by the delta and b chains.

Its subcellular location is the cell inner membrane. In terms of biological role, f(1)F(0) ATP synthase produces ATP from ADP in the presence of a proton or sodium gradient. F-type ATPases consist of two structural domains, F(1) containing the extramembraneous catalytic core and F(0) containing the membrane proton channel, linked together by a central stalk and a peripheral stalk. During catalysis, ATP synthesis in the catalytic domain of F(1) is coupled via a rotary mechanism of the central stalk subunits to proton translocation. This protein is part of the stalk that links CF(0) to CF(1). It either transmits conformational changes from CF(0) to CF(1) or is implicated in proton conduction. This chain is ATP synthase subunit delta, found in Shigella flexneri.